A 289-amino-acid polypeptide reads, in one-letter code: tRNA pseudouridine synthase B (289 aa).

Asp-38 functions as the Nucleophile in the catalytic mechanism.

The protein belongs to the pseudouridine synthase TruB family. Type 1 subfamily.

It carries out the reaction uridine(55) in tRNA = pseudouridine(55) in tRNA. Its function is as follows. Responsible for synthesis of pseudouridine from uracil-55 in the psi GC loop of transfer RNAs. The sequence is that of tRNA pseudouridine synthase B from Clostridium tetani (strain Massachusetts / E88).